A 306-amino-acid chain; its full sequence is D-alanine--D-alanine ligase B (306 aa).

An ATP-grasp domain is found at 101–303; the sequence is KLLWQGAGLP…FSQLVVRILE (203 aa). Residue 134–189 coordinates ATP; it reads ISALGLPVIVKPSREGSSVGMSKVVAENALQDALRLAFQHDEEVLIEKWLSGPEFT. Mg(2+)-binding residues include D257, E270, and N272.

This sequence belongs to the D-alanine--D-alanine ligase family. It depends on Mg(2+) as a cofactor. Requires Mn(2+) as cofactor.

The protein resides in the cytoplasm. It catalyses the reaction 2 D-alanine + ATP = D-alanyl-D-alanine + ADP + phosphate + H(+). It participates in cell wall biogenesis; peptidoglycan biosynthesis. Functionally, cell wall formation. This is D-alanine--D-alanine ligase B from Shigella flexneri.